The chain runs to 331 residues: MSKVFMFDALRAATDEEMEKDLTVCVIGEDVGHYGGSYKVTKDLHSKYGDLRVLDTPIAENSFTGMAIGAAITGLRPIVEGMNMSFLLLAFNQISNNAGMLRYTSGGNFTLPLVIRGPGGVGRQLGAEHSQRLEAYFQAIPGLKIVACSTPYNAKGLLKSAIRDNNPVVFFEHVLLYNLQEEIPEDEYLIPLDKAEVVRKGKDITILTYSRMRHHVTEALPLLLNDGYDPEVLDLISLKPLDIDSISVSVKKTHRVLIVEECMKTAGIGAELIAQINEHLFDELDAPVVRLSSQDIPTPYNGSLEQATVIQPHQIIDAVKNIVNSSKTITT.

A thiamine diphosphate-binding site is contributed by Glu60. The K(+) site is built by Leu113, Ala161, Ile162, Asp164, and Asn166.

In terms of assembly, heterodimer of an alpha and a beta chain. Thiamine diphosphate is required as a cofactor.

The protein localises to the plastid. It localises to the chloroplast. The enzyme catalyses N(6)-[(R)-lipoyl]-L-lysyl-[protein] + pyruvate + H(+) = N(6)-[(R)-S(8)-acetyldihydrolipoyl]-L-lysyl-[protein] + CO2. The pyruvate dehydrogenase complex catalyzes the overall conversion of pyruvate to acetyl-CoA and CO(2). It contains multiple copies of three enzymatic components: pyruvate dehydrogenase (E1), dihydrolipoamide acetyltransferase (E2) and lipoamide dehydrogenase (E3). The chain is Pyruvate dehydrogenase E1 component subunit beta (pdhB) from Porphyra purpurea (Red seaweed).